Here is a 466-residue protein sequence, read N- to C-terminus: RuvB-like helicase 2 (466 aa).

ATP is bound at residue 74–81 (GPPSTGKT).

The protein belongs to the RuvB family. As to quaternary structure, may form heterododecamers with RVB1. Component of the SWR1 chromatin remodeling complex, the INO80 chromatin remodeling complex, and of the R2TP complex.

It localises to the nucleus. The catalysed reaction is ATP + H2O = ADP + phosphate + H(+). Its function is as follows. DNA helicase which participates in several chromatin remodeling complexes, including the SWR1 and the INO80 complexes. The SWR1 complex mediates the ATP-dependent exchange of histone H2A for the H2A variant HZT1 leading to transcriptional regulation of selected genes by chromatin remodeling. The INO80 complex remodels chromatin by shifting nucleosomes and is involved in DNA repair. Also involved in pre-rRNA processing. The chain is RuvB-like helicase 2 (RVB2) from Yarrowia lipolytica (strain CLIB 122 / E 150) (Yeast).